Here is a 1360-residue protein sequence, read N- to C-terminus: DNA-directed RNA polymerase subunit beta (1360 aa).

Belongs to the RNA polymerase beta chain family. As to quaternary structure, the RNAP catalytic core consists of 2 alpha, 1 beta, 1 beta' and 1 omega subunit. When a sigma factor is associated with the core the holoenzyme is formed, which can initiate transcription.

It carries out the reaction RNA(n) + a ribonucleoside 5'-triphosphate = RNA(n+1) + diphosphate. In terms of biological role, DNA-dependent RNA polymerase catalyzes the transcription of DNA into RNA using the four ribonucleoside triphosphates as substrates. This Teredinibacter turnerae (strain ATCC 39867 / T7901) protein is DNA-directed RNA polymerase subunit beta.